The chain runs to 59 residues: Insulin (59 aa).

3 disulfides stabilise this stretch: Cys-7–Cys-45, Cys-19–Cys-58, and Cys-44–Cys-49.

It belongs to the insulin family. In terms of assembly, heterodimer of a B chain and an A chain linked by two disulfide bonds.

The protein localises to the secreted. Its function is as follows. Insulin decreases blood glucose concentration. It increases cell permeability to monosaccharides, amino acids and fatty acids. It accelerates glycolysis, the pentose phosphate cycle, and glycogen synthesis in liver. The polypeptide is Insulin (ins) (Chimaera monstrosa (Rabbit fish)).